The primary structure comprises 185 residues: Ribosome-recycling factor (185 aa).

Belongs to the RRF family.

The protein localises to the cytoplasm. Functionally, responsible for the release of ribosomes from messenger RNA at the termination of protein biosynthesis. May increase the efficiency of translation by recycling ribosomes from one round of translation to another. This chain is Ribosome-recycling factor, found in Clostridium perfringens (strain ATCC 13124 / DSM 756 / JCM 1290 / NCIMB 6125 / NCTC 8237 / Type A).